The chain runs to 415 residues: Alditol oxidase (415 aa).

The region spanning 12 to 179 (ITYTAKEVHR…TALTLDLEPA (168 aa)) is the FAD-binding PCMH-type domain. H46 is modified (pros-8alpha-FAD histidine). FAD is bound by residues S106, S111, G114, 118 to 121 (TGTH), and V169. A xylitol-binding site is contributed by S106. Residues E317, R319, and T342 each coordinate xylitol. R319 is a binding site for FAD. H369 contributes to the FAD binding site. K372 is a xylitol binding site.

Belongs to the oxygen-dependent FAD-linked oxidoreductase family. Monomer. Requires FAD as cofactor.

The enzyme catalyses an alditol + O2 = an aldose + H2O2. It carries out the reaction xylitol + O2 = D-xylose + H2O2. The catalysed reaction is D-sorbitol + O2 = D-glucose + H2O2. Its function is as follows. Oxidase that performs selective oxidation of the terminal primary hydroxyl group of several alditols, with a reduction of O2 to H2O2. Shows highest activity on xylitol and D-sorbitol, and to a lesser extent, can also use galactitol, D-mannitol, and D-arabitol as substrates in vitro. Is not active on D-glucose, D-xylose, D-galactose, D-mannose, D-fructose, L-sorbose, L-fucose, myoinositol, glycerol, ethyl alcohol, and meso-erythritol. This Streptomyces sp. (strain IKD472 / FERM P-14339) protein is Alditol oxidase.